A 384-amino-acid polypeptide reads, in one-letter code: MKFIDEAKIEVAAGKGGNGATSFRREKFVPRGGPDGGDGGKGGSVWAEADENTNTLVEYRFVKRYQAKNGEKGHGSDRYGAGADDIVLKMPVGTLIRDLDTDEIVADLTYHGQRVCLAKGGKGGLGNIHFKSSVNRAPKQSTPGEEGEARSLQLELKVLADVGLLGMPNAGKSTLITAVSAARPKIANYPFTTLHPNLGVVRIDENHSFVMADIPGLIEGAAEGAGLGHRFLKHLSRTGLLLHVVDLAPFDETVNPAEEALAIINELRKYDEELYGKPRWLVLNKLDMLDEEEAQTRTAAFLEAVGWDYPKPDDRFQFDMETPRLFQISALTHQGTQELVHQINQYLTEKKRIEAEKAEAEKAAANVEIIEQQPKTDTGVFKPE.

In terms of domain architecture, Obg spans 1–159 (MKFIDEAKIE…RSLQLELKVL (159 aa)). Positions 20-46 (ATSFRREKFVPRGGPDGGDGGKGGSVW) are disordered. The segment covering 33-43 (GPDGGDGGKGG) has biased composition (gly residues). Residues 160 to 348 (ADVGLLGMPN…LVHQINQYLT (189 aa)) form the OBG-type G domain. GTP contacts are provided by residues 166–173 (GMPNAGKS), 191–195 (FTTLH), 213–216 (DIPG), 284–287 (NKLD), and 329–331 (SAL). Mg(2+)-binding residues include S173 and T193.

It belongs to the TRAFAC class OBG-HflX-like GTPase superfamily. OBG GTPase family. As to quaternary structure, monomer. Mg(2+) is required as a cofactor.

It localises to the cytoplasm. Functionally, an essential GTPase which binds GTP, GDP and possibly (p)ppGpp with moderate affinity, with high nucleotide exchange rates and a fairly low GTP hydrolysis rate. Plays a role in control of the cell cycle, stress response, ribosome biogenesis and in those bacteria that undergo differentiation, in morphogenesis control. The chain is GTPase Obg from Neisseria meningitidis serogroup C / serotype 2a (strain ATCC 700532 / DSM 15464 / FAM18).